Here is a 343-residue protein sequence, read N- to C-terminus: Cyclin-Y-like protein 1-B (343 aa).

The disordered stretch occupies residues methionine 1–alanine 69. Over residues alanine 17–glutamate 28 the composition is skewed to basic and acidic residues. In terms of domain architecture, Cyclin N-terminal spans aspartate 145–asparagine 267.

This sequence belongs to the cyclin family. Cyclin Y subfamily.

The chain is Cyclin-Y-like protein 1-B (ccnyl1-b) from Xenopus laevis (African clawed frog).